Here is a 147-residue protein sequence, read N- to C-terminus: Nucleoside diphosphate kinase (147 aa).

ATP is bound by residues K9, R85, T91, R102, and N112. The active-site Pros-phosphohistidine intermediate is H115.

The protein belongs to the NDK family. Mg(2+) serves as cofactor.

The catalysed reaction is a 2'-deoxyribonucleoside 5'-diphosphate + ATP = a 2'-deoxyribonucleoside 5'-triphosphate + ADP. It carries out the reaction a ribonucleoside 5'-diphosphate + ATP = a ribonucleoside 5'-triphosphate + ADP. Functionally, major role in the synthesis of nucleoside triphosphates other than ATP. The ATP gamma phosphate is transferred to the NDP beta phosphate via a ping-pong mechanism, using a phosphorylated active-site intermediate. The sequence is that of Nucleoside diphosphate kinase (NDK1) from Encephalitozoon cuniculi (strain GB-M1) (Microsporidian parasite).